The chain runs to 611 residues: DNA-directed RNA polymerase subunit Rpo2C (611 aa).

Zn(2+) is bound by residues Cys-547, Cys-550, Cys-565, and Cys-568.

It belongs to the RNA polymerase beta chain family. In terms of assembly, part of the RNA polymerase complex. Zn(2+) is required as a cofactor.

Its subcellular location is the cytoplasm. The enzyme catalyses RNA(n) + a ribonucleoside 5'-triphosphate = RNA(n+1) + diphosphate. In terms of biological role, DNA-dependent RNA polymerase (RNAP) catalyzes the transcription of DNA into RNA using the four ribonucleoside triphosphates as substrates. The Rpo2 subunit (Rpo2N and Rpo2C in this organism) is implicated in DNA promoter recognition and in nucleotide binding. The sequence is that of DNA-directed RNA polymerase subunit Rpo2C from Methanococcus vannielii (strain ATCC 35089 / DSM 1224 / JCM 13029 / OCM 148 / SB).